The sequence spans 121 residues: Small ribosomal subunit protein uS13 (121 aa).

Positions 88–121 (GMRHRRGLPTRGQNTKNNARTRKGPAKSIAGKKK) are disordered. Residues 106–121 (ARTRKGPAKSIAGKKK) are compositionally biased toward basic residues.

This sequence belongs to the universal ribosomal protein uS13 family. Part of the 30S ribosomal subunit. Forms a loose heterodimer with protein S19. Forms two bridges to the 50S subunit in the 70S ribosome.

Its function is as follows. Located at the top of the head of the 30S subunit, it contacts several helices of the 16S rRNA. In the 70S ribosome it contacts the 23S rRNA (bridge B1a) and protein L5 of the 50S subunit (bridge B1b), connecting the 2 subunits; these bridges are implicated in subunit movement. Contacts the tRNAs in the A and P-sites. The chain is Small ribosomal subunit protein uS13 from Lactococcus lactis subsp. cremoris (strain MG1363).